Consider the following 360-residue polypeptide: Histidinol-phosphate aminotransferase (360 aa).

K223 is modified (N6-(pyridoxal phosphate)lysine).

This sequence belongs to the class-II pyridoxal-phosphate-dependent aminotransferase family. Histidinol-phosphate aminotransferase subfamily. In terms of assembly, homodimer. Pyridoxal 5'-phosphate is required as a cofactor.

It carries out the reaction L-histidinol phosphate + 2-oxoglutarate = 3-(imidazol-4-yl)-2-oxopropyl phosphate + L-glutamate. Its pathway is amino-acid biosynthesis; L-histidine biosynthesis; L-histidine from 5-phospho-alpha-D-ribose 1-diphosphate: step 7/9. This chain is Histidinol-phosphate aminotransferase (hisC), found in Bacillus subtilis (strain 168).